We begin with the raw amino-acid sequence, 100 residues long: Glyceraldehyde-3-phosphate dehydrogenase, testis-specific (100 aa).

Positions 39 and 64 each coordinate NAD(+). Arginine 89 is a binding site for D-glyceraldehyde 3-phosphate.

The protein belongs to the glyceraldehyde-3-phosphate dehydrogenase family. As to quaternary structure, homotetramer.

The protein localises to the cytoplasm. The enzyme catalyses D-glyceraldehyde 3-phosphate + phosphate + NAD(+) = (2R)-3-phospho-glyceroyl phosphate + NADH + H(+). Its pathway is carbohydrate degradation; glycolysis; pyruvate from D-glyceraldehyde 3-phosphate: step 1/5. Its function is as follows. May play an important role in regulating the switch between different pathways for energy production during spermiogenesis and in the spermatozoon. Required for sperm motility and male fertility. This chain is Glyceraldehyde-3-phosphate dehydrogenase, testis-specific, found in Mesocricetus auratus (Golden hamster).